The primary structure comprises 326 residues: Flap endonuclease 1 (326 aa).

Positions 1-100 are N-domain; the sequence is MGNADLRSLA…DEVEKRREQR (100 aa). The Mg(2+) site is built by D28, D82, E154, E156, D175, D177, and D225. The segment at 118–246 is I-domain; sequence RVAKLDSRTQ…TAVKDLHEHG (129 aa). Positions 318-326 are interaction with PCNA; that stretch reads VQTGLDRWA.

The protein belongs to the XPG/RAD2 endonuclease family. FEN1 subfamily. In terms of assembly, interacts with PCNA. PCNA stimulates the nuclease activity without altering cleavage specificity. It depends on Mg(2+) as a cofactor.

In terms of biological role, structure-specific nuclease with 5'-flap endonuclease and 5'-3' exonuclease activities involved in DNA replication and repair. During DNA replication, cleaves the 5'-overhanging flap structure that is generated by displacement synthesis when DNA polymerase encounters the 5'-end of a downstream Okazaki fragment. Binds the unpaired 3'-DNA end and kinks the DNA to facilitate 5' cleavage specificity. Cleaves one nucleotide into the double-stranded DNA from the junction in flap DNA, leaving a nick for ligation. Also involved in the base excision repair (BER) pathway. Acts as a genome stabilization factor that prevents flaps from equilibrating into structures that lead to duplications and deletions. Also possesses 5'-3' exonuclease activity on nicked or gapped double-stranded DNA. In Haloarcula marismortui (strain ATCC 43049 / DSM 3752 / JCM 8966 / VKM B-1809) (Halobacterium marismortui), this protein is Flap endonuclease 1.